We begin with the raw amino-acid sequence, 663 residues long: MSPKAVVFAYHDIGCVGLQALLGAGYEIAAVFTHADDPKEKTFFGSVAQLCARHGIPVHAPEDPNHPLWVERIDKLAPDFIFSFYYRQLLGDPLLACAKKGALNLHGSLLPRYRGRAPANWVLVNGESETGVTLHQMVKRADAGPIVAQQRVSISSTDTALTLHGKLREAAADLLSETLPLLALGQLSGTPQDETRASCFGRRTPADGLIDWSLPATQLYNLIRAVTQPYPGAFCAVGENKLIVWAASAEAGNNGEAPGTVISHDPLRIACGEGSLVINAGQRGDNGLYLSGAQLAREFGLVEGSQLLDTEKRRPARRTRVLILGVNGFIGNHLSERLLQDDRYDIYGMDIGSDAIERLRTKPNFHFIEGDISIHTEWIEYHIKKCDVVLPLVAIATPIEYTRNPLRVFELDFEENLKIVRYCVKYNKRVIFPSTSEVYGMCQDASFNEDTSNLIVGPINKQRWIYSVSKQLLDRVIWAYGQKGLQFTLFRPFNWMGPRLDRLDSARIGSSRAITQLILHLVEGTPIRLVDGGAQKRCFTDVADGIEALARIIENRDGCCNGQIINIGNPDNEASIRQLGEELLRQFEAHPLRGNFPPFAGFREVESQSFYGKGYQDVSHRKPSIDNARQLIGWTPGIELSETIGKTLDFFLREAMAEKADMR.

The tract at residues 1 to 307 (MSPKAVVFAY…EFGLVEGSQL (307 aa)) is formyltransferase ArnAFT. Residue histidine 106 is the Proton donor; for formyltransferase activity of the active site. (6R)-10-formyltetrahydrofolate contacts are provided by residues arginine 116 and 138–142 (VKRAD). The dehydrogenase ArnADH stretch occupies residues 317–663 (RRTRVLILGV…EAMAEKADMR (347 aa)). NAD(+) contacts are provided by residues aspartate 350 and 371-372 (DI). UDP-alpha-D-glucuronate contacts are provided by residues alanine 396, tyrosine 401, and 435–436 (TS). Residue glutamate 437 is the Proton acceptor; for decarboxylase activity of the active site. UDP-alpha-D-glucuronate contacts are provided by residues arginine 463, asparagine 494, 528–537 (RLVDGGAQKR), and tyrosine 615. Arginine 621 (proton donor; for decarboxylase activity) is an active-site residue.

The protein in the N-terminal section; belongs to the Fmt family. UDP-L-Ara4N formyltransferase subfamily. This sequence in the C-terminal section; belongs to the NAD(P)-dependent epimerase/dehydratase family. UDP-glucuronic acid decarboxylase subfamily. Homohexamer, formed by a dimer of trimers.

It carries out the reaction UDP-alpha-D-glucuronate + NAD(+) = UDP-beta-L-threo-pentopyranos-4-ulose + CO2 + NADH. The catalysed reaction is UDP-4-amino-4-deoxy-beta-L-arabinose + (6R)-10-formyltetrahydrofolate = UDP-4-deoxy-4-formamido-beta-L-arabinose + (6S)-5,6,7,8-tetrahydrofolate + H(+). The protein operates within nucleotide-sugar biosynthesis; UDP-4-deoxy-4-formamido-beta-L-arabinose biosynthesis; UDP-4-deoxy-4-formamido-beta-L-arabinose from UDP-alpha-D-glucuronate: step 1/3. It participates in nucleotide-sugar biosynthesis; UDP-4-deoxy-4-formamido-beta-L-arabinose biosynthesis; UDP-4-deoxy-4-formamido-beta-L-arabinose from UDP-alpha-D-glucuronate: step 3/3. It functions in the pathway bacterial outer membrane biogenesis; lipopolysaccharide biosynthesis. Bifunctional enzyme that catalyzes the oxidative decarboxylation of UDP-glucuronic acid (UDP-GlcUA) to UDP-4-keto-arabinose (UDP-Ara4O) and the addition of a formyl group to UDP-4-amino-4-deoxy-L-arabinose (UDP-L-Ara4N) to form UDP-L-4-formamido-arabinose (UDP-L-Ara4FN). The modified arabinose is attached to lipid A and is required for resistance to polymyxin and cationic antimicrobial peptides. The sequence is that of Bifunctional polymyxin resistance protein ArnA from Pseudomonas savastanoi pv. phaseolicola (strain 1448A / Race 6) (Pseudomonas syringae pv. phaseolicola (strain 1448A / Race 6)).